The chain runs to 714 residues: Fatty acid oxidation complex subunit alpha (714 aa).

The tract at residues 1 to 190 (MEMASAFTLN…KLGLVDDVVP (190 aa)) is enoyl-CoA hydratase. The 3-hydroxyacyl-CoA dehydrogenase stretch occupies residues 306 to 714 (APLNSVGILG…FWKTTATDLQ (409 aa)).

In the N-terminal section; belongs to the enoyl-CoA hydratase/isomerase family. This sequence in the central section; belongs to the 3-hydroxyacyl-CoA dehydrogenase family. In terms of assembly, heterotetramer of two alpha chains (FadJ) and two beta chains (FadI).

Its subcellular location is the cytoplasm. The enzyme catalyses a (3S)-3-hydroxyacyl-CoA = a (2E)-enoyl-CoA + H2O. It catalyses the reaction a 4-saturated-(3S)-3-hydroxyacyl-CoA = a (3E)-enoyl-CoA + H2O. The catalysed reaction is a (3S)-3-hydroxyacyl-CoA + NAD(+) = a 3-oxoacyl-CoA + NADH + H(+). It carries out the reaction (3S)-3-hydroxybutanoyl-CoA = (3R)-3-hydroxybutanoyl-CoA. The protein operates within lipid metabolism; fatty acid beta-oxidation. Catalyzes the formation of a hydroxyacyl-CoA by addition of water on enoyl-CoA. Also exhibits 3-hydroxyacyl-CoA epimerase and 3-hydroxyacyl-CoA dehydrogenase activities. The chain is Fatty acid oxidation complex subunit alpha from Escherichia coli O45:K1 (strain S88 / ExPEC).